We begin with the raw amino-acid sequence, 181 residues long: Photosystem I assembly protein Ycf4 (181 aa).

Helical transmembrane passes span Y19–S39 and I61–L81.

It belongs to the Ycf4 family.

The protein resides in the plastid. It localises to the chloroplast thylakoid membrane. Seems to be required for the assembly of the photosystem I complex. This chain is Photosystem I assembly protein Ycf4, found in Thalassiosira pseudonana (Marine diatom).